The following is a 772-amino-acid chain: Annulin (772 aa).

Residues Cys4 and Cys5 are each lipidated (S-palmitoyl cysteine). The segment at 15-57 is disordered; it reads NEGSGGGIPLMPVRGGSTRRPDSLPKPPAAVVPSPPSPGDVPD. A compositionally biased stretch (pro residues) spans 38–53; that stretch reads LPKPPAAVVPSPPSPG. Active-site residues include His400 and Asp427. Ca(2+) is bound by residues Asn467, Asp469, Glu517, and Glu522.

The protein belongs to the transglutaminase superfamily. Transglutaminase family. Ca(2+) is required as a cofactor. As to expression, has an annular, or ring-like expression pattern in epithelial annuli of developing limb segment boundary cells. In embryos, it is seen in gastrulating cells, in cells surrounding rapidly dividing neuroblasts, and in muscle pioneer cells invaginating to form apodemes.

The protein resides in the cell membrane. It carries out the reaction L-glutaminyl-[protein] + L-lysyl-[protein] = [protein]-L-lysyl-N(6)-5-L-glutamyl-[protein] + NH4(+). In terms of biological role, participates in morphogenetic activities of the cells, maybe by stabilizing the membrane or subcortical structures of cells that are under mechanical stress. Probably catalyzes the cross-linking of proteins and the conjugation of polyamines to proteins. The sequence is that of Annulin from Schistocerca americana (American grasshopper).